The primary structure comprises 83 residues: Cell division topological specificity factor (83 aa).

The protein belongs to the MinE family.

Prevents the cell division inhibition by proteins MinC and MinD at internal division sites while permitting inhibition at polar sites. This ensures cell division at the proper site by restricting the formation of a division septum at the midpoint of the long axis of the cell. This is Cell division topological specificity factor from Deinococcus deserti (strain DSM 17065 / CIP 109153 / LMG 22923 / VCD115).